A 1030-amino-acid polypeptide reads, in one-letter code: MMS19 nucleotide excision repair protein homolog (1030 aa).

Position 2 is an N-acetylalanine (alanine 2). HEAT repeat units follow at residues 866–904, 908–946, 949–987, and 990–1028; these read QRFF…RLPK, LPEL…EAPQ, SLHV…LPTP, and LPYK…LGSP. Serine 1027 carries the phosphoserine modification.

This sequence belongs to the MET18/MMS19 family. In terms of assembly, component of the CIA complex. In the CIA complex, interacts directly with CIAO2B and CIAO3. Component of the MMXD complex, composed of CIAO1, ERCC2, CIAO2B, MMS19 and SLC25A5. Interacts with CIAO2B; the interaction is direct. Interacts with ERCC2/XPD; the interaction is direct. Interacts with ERCC3/XPB and NCOA3/RAC3. Interacts with RTEL1; the interaction mediates the association of RTEL1 with the CIA complex. Interacts with BRIP1. Interacts with KIF4A; the interaction facilitates the transfer of Fe-S clusters to KIF4A to ensure proper localization of KIF4A to the mitotic machinery components. Interacts with CCDC117; the interaction is indirect. In terms of processing, ubiquitinated; undergoes 'Lys-48'-linked polyubiquitination.

Its subcellular location is the nucleus. The protein localises to the cytoplasm. It localises to the cytoskeleton. It is found in the spindle. Key component of the cytosolic iron-sulfur protein assembly (CIA) complex, a multiprotein complex that mediates the incorporation of iron-sulfur cluster into apoproteins specifically involved in DNA metabolism and genomic integrity. In the CIA complex, MMS19 acts as an adapter between early-acting CIA components and a subset of cellular target Fe/S proteins such as ERCC2/XPD, FANCJ and RTEL1, thereby playing a key role in nucleotide excision repair (NER), homologous recombination-mediated double-strand break DNA repair, DNA replication and RNA polymerase II (POL II) transcription. As a CIA complex component and in collaboration with CIAO1 and CIAO2, binds to and facilitates the assembly of most cytosolic-nuclear Fe/S proteins. As part of the mitotic spindle-associated MMXD complex, plays a role in chromosome segregation, probably by facilitating iron-sulfur cluster assembly into ERCC2/XPD. Together with CIAO2, facilitates the transfer of Fe-S clusters to the motor protein KIF4A, which ensures proper localization of KIF4A to mitotic machinery components to promote the progression of mitosis. Indirectly acts as a transcriptional coactivator of estrogen receptor (ER), via its role in iron-sulfur insertion into some component of the TFIIH-machinery. The polypeptide is MMS19 nucleotide excision repair protein homolog (Bos taurus (Bovine)).